Consider the following 190-residue polypeptide: Protein GrpE (190 aa).

The interval 1 to 42 (MNEKDNQTTSEPENEQEIIDVNDSGEQPEENETEQPQEEAVE) is disordered. Residues 26 to 42 (EQPEENETEQPQEEAVE) are compositionally biased toward acidic residues.

This sequence belongs to the GrpE family. In terms of assembly, homodimer.

It localises to the cytoplasm. Functionally, participates actively in the response to hyperosmotic and heat shock by preventing the aggregation of stress-denatured proteins, in association with DnaK and GrpE. It is the nucleotide exchange factor for DnaK and may function as a thermosensor. Unfolded proteins bind initially to DnaJ; upon interaction with the DnaJ-bound protein, DnaK hydrolyzes its bound ATP, resulting in the formation of a stable complex. GrpE releases ADP from DnaK; ATP binding to DnaK triggers the release of the substrate protein, thus completing the reaction cycle. Several rounds of ATP-dependent interactions between DnaJ, DnaK and GrpE are required for fully efficient folding. In Oceanobacillus iheyensis (strain DSM 14371 / CIP 107618 / JCM 11309 / KCTC 3954 / HTE831), this protein is Protein GrpE.